A 416-amino-acid polypeptide reads, in one-letter code: Venom allergen 5 (416 aa).

Residues 1–24 (MKGILLLFLKLVVLFVYLCSSVLS) form the signal peptide. The region spanning 57 to 217 (DDRNTIINLH…NYGPAGNLDD (161 aa)) is the SCP domain. Residue arginine 82 is modified to Arginine amide; in Cryptide Pep-4.

It belongs to the CRISP family. Venom allergen 5-like subfamily. Post-translationally, contains 9 disulfide bonds. As to expression, expressed by the venom gland.

It is found in the secreted. Its function is as follows. Presents weak lactate dehydrogenase (LDH) release from mast cells. Does not induce hemolytic activity, mast cell degranulation, and antimicrobial effects. In vivo, injection into mice causes moderate edema formation, but induces very weak or no change in nociceptive sensibility. It also causes an alteration in rearing (standing on hind limbs), but does not impact locomotion. This Tityus serrulatus (Brazilian scorpion) protein is Venom allergen 5.